A 432-amino-acid polypeptide reads, in one-letter code: Phosphomethylpyrimidine synthase (432 aa).

Substrate-binding positions include N66, M95, Y124, H163, 185–187 (SRG), 226–229 (DGLR), and E265. H269 lines the Zn(2+) pocket. Residue Y292 participates in substrate binding. Zn(2+) is bound at residue H333. Positions 409, 412, and 416 each coordinate [4Fe-4S] cluster.

Belongs to the ThiC family. Requires [4Fe-4S] cluster as cofactor.

It catalyses the reaction 5-amino-1-(5-phospho-beta-D-ribosyl)imidazole + S-adenosyl-L-methionine = 4-amino-2-methyl-5-(phosphooxymethyl)pyrimidine + CO + 5'-deoxyadenosine + formate + L-methionine + 3 H(+). The protein operates within cofactor biosynthesis; thiamine diphosphate biosynthesis. Its function is as follows. Catalyzes the synthesis of the hydroxymethylpyrimidine phosphate (HMP-P) moiety of thiamine from aminoimidazole ribotide (AIR) in a radical S-adenosyl-L-methionine (SAM)-dependent reaction. This is Phosphomethylpyrimidine synthase from Thermoanaerobacter sp. (strain X514).